A 416-amino-acid chain; its full sequence is Glutamyl-tRNA reductase (416 aa).

Substrate contacts are provided by residues 49 to 52 (TCNR), S105, 110 to 112 (ETQ), and Q116. C50 acts as the Nucleophile in catalysis. 185-190 (GAGEMI) provides a ligand contact to NADP(+).

Belongs to the glutamyl-tRNA reductase family. Homodimer.

The catalysed reaction is (S)-4-amino-5-oxopentanoate + tRNA(Glu) + NADP(+) = L-glutamyl-tRNA(Glu) + NADPH + H(+). The protein operates within porphyrin-containing compound metabolism; protoporphyrin-IX biosynthesis; 5-aminolevulinate from L-glutamyl-tRNA(Glu): step 1/2. Functionally, catalyzes the NADPH-dependent reduction of glutamyl-tRNA(Glu) to glutamate 1-semialdehyde (GSA). The polypeptide is Glutamyl-tRNA reductase (Thiobacillus denitrificans (strain ATCC 25259 / T1)).